The following is a 101-amino-acid chain: Urease subunit beta (101 aa).

This sequence belongs to the urease beta subunit family. In terms of assembly, heterotrimer of UreA (gamma), UreB (beta) and UreC (alpha) subunits. Three heterotrimers associate to form the active enzyme.

Its subcellular location is the cytoplasm. It catalyses the reaction urea + 2 H2O + H(+) = hydrogencarbonate + 2 NH4(+). It participates in nitrogen metabolism; urea degradation; CO(2) and NH(3) from urea (urease route): step 1/1. In Granulibacter bethesdensis (strain ATCC BAA-1260 / CGDNIH1), this protein is Urease subunit beta.